Here is a 447-residue protein sequence, read N- to C-terminus: UDP-N-acetyl-alpha-D-muramoyl-L-alanyl-L-glutamate epimerase (447 aa).

This sequence belongs to the MurL family.

The enzyme catalyses UDP-N-acetyl-alpha-D-muramoyl-L-alanyl-L-glutamate + ATP + H2O = UDP-N-acetyl-alpha-D-muramoyl-L-alanyl-D-glutamate + AMP + diphosphate + H(+). The protein operates within cell wall biogenesis; peptidoglycan biosynthesis. Cell wall formation. Catalyzes epimerization of the terminal L-glutamate in UDP-N-acetyl-alpha-D-muramoyl-L-alanyl-L-glutamate. The polypeptide is UDP-N-acetyl-alpha-D-muramoyl-L-alanyl-L-glutamate epimerase (Micromonospora sp. (strain ATCC 39149 / NRRL 15099 / SCC 1413)).